Reading from the N-terminus, the 1069-residue chain is MSPIAIDTAPFQRARVNLLHPEDPKAVKSIVQLLQFNAEHNPDHVFCLQLPSKQDDAIGNPIRITHLQFYRAVSYCTQRLQEEIDGLHGPRVNEDGTVTKCSPVVLFMESNVGLLIHLLALMSLGVPVAVLSARLSPTAVQHLMSSIRAQSVIASPRLKGTIEEAIASDNNTPAIGVRMYTQRPFEDDLENSRTLDLPATNEESHFISENDRNVLILHSSGTTGLPKPIYQPHRYLLNYSECHELGPDDALGTVLSALPLFHGFGLVAPCLAMTVGKPFMLPPSNTIPTGSLIIELIQSFQPTALMTVPHILEEITTLPPEQSISALQPLEFVLCGGGPLKISVAEALAASGVNLLAHFGTTETGPLGVVFVPTPDYDWHYWKLRQDINYRLDEVDANSADGNQYKLTVHPFGWDSAFEIQDILLSRGAEYKHHLRAVGRKDDLIVLANGEKLVPRVLETLLMQDERVKSAVAFGEGKFEIGVIVEPTHKVSDEEDFKAALWAIVLEAGAQMDSHAQVSSPSSIILATPEKPVPRSDKGSILRRETYRVYDEEISRVYEVLDRASEETTALNLQSDSLEEDLKDLIQREIGWKISPSEWLQDSDLFELGMNSLQAIRLHRLLLSSLPVDSRERVGADFVYRSPSVSKLGASLRHLAANENGHRNDPETEIDELICLNSFIARQDATVLLTGSTGNLGSNLLAHLTTLPRVKKVICLNRRGSDTSTAHTDLVERQLAIAKSKGVVIDPESASKIEVIPCDPSADFFGLPAEVYTHLTAQTTHILHNAWPMDFKRNVASFQSQFQYLNNLLRVAHDTRLCRPSIKPRFLFVSSIAVVGQYPRTHGTRLIPEVPSDKSSIIEDFGYGKAKYVCEEIMRAAADRYPEMQLGIVRVGQMSGSSRTGYWNPKEHFPTLIKFASMVGQLPAIKQTLSWIAVDNAATVLSDILFAPSLSGIYHLENPIRQAWQDVLDIFASSLYINTVNVPFDQWLRNVQAAVQELGTEDERMEYDLLAEFLEKDFQRMATGKVILDTSRSRAVSETLREVGEISEEVVWKYVREWRRAGTLRAPLE.

Residues H20 to R391 form an adenylation (A) domain region. AMP is bound by residues H262, A357 to H358, T362, and A437 to R440. Residues D576–A656 enclose the Carrier domain. S612 carries the O-(pantetheine 4'-phosphoryl)serine modification. The reductase (R) domain stretch occupies residues T686–R1032. NADP(+) is bound by residues T693–L696, R719, N785–W787, Y863, and K867.

The protein belongs to the adenylate-forming reductase family.

The catalysed reaction is 5-methylorsellinate + ATP + NADPH + H(+) = 2,4-dihydroxy 5,6-dimethylbenzaldehyde + AMP + diphosphate + NADP(+). Its pathway is secondary metabolite biosynthesis. Non-canonical non-ribosomal peptide synthetase; part of the cluster A that mediates the biosynthesis of azasperpyranones, members of the azaphilone family that exhibit anti-cancer activities. Azasperpyranones are synthesized by 2 clusters, A and B. Cluster A is responsible for the production of the polyhydric phenol moiety while the azaphilonoid scaffold is produced by the cluster B. The non-reducing polyketide synthase ATEG_03629 produces 5-methyl orsellinic acid, which is then reduced to 5-methyl orsellinic aldehyde by the NRPS-like protein ATEG_03630. 5-methyl orsellinic aldehyde is then first hydroxylated by the FAD-dependent monooxygenase ATEG_03635 and subsequently hydroxylated by the cytochrome P450 monooxygenase ATEG_03631 to produce the unstable polyhydric phenol precursor of azasperpyranones. On the other hand, the polyketide synthase ATEG_07659 is responsible for producing the 3,5-dimethyloctadienone moiety from acetyl-CoA, three malonyl-CoA, and two S-adenosyl methionines (SAM). The 3,5-dimethyloctadienone moiety is then loaded onto the SAT domain of ATEG_07661 and extended with four malonyl-CoA and one SAM, which leads to the formation of 2,4-dihydroxy-6-(5,7-dimethyl-2-oxo-trans-3-trans-5-nonadienyl)-3-methylbenzaldehyde (compound 8) after reductive release and aldol condensation. The FAD-dependent monooxygenase ATEG_07662 is the next enzyme in the biosynthesis sequence and hydroxylates the side chain at the benzylic position of compound 8. In Aspergillus nidulans, afoF, the ortholog of the FAD-dependent oxygenase ATEG_07660, is the key enzyme for the biosynthesis of asperfuranone by catalyzing the hydroxylation at C-8 of to prevent the formation of a six-membered ring hemiacetal intermediate and thus facilitating the formation of a five-membered ring to produce asperfuranone. In Aspergillus terreus, ATEG_07660 is probably not functional, which leads to the formation of the six-membered ring hemiacetal intermediate presperpyranone instead of asperfuranone. Finally, ATEG_03636 is involved in the condensation of the polyhydric phenol moiety produced by cluster A and the perasperpyranone precursor produced by cluster B, to yield azasperpyranone A. Further modifications of azasperpyranone A result in the production of derivatives, including azasperpyranone B to F. The polypeptide is Adenylate-forming reductase (Aspergillus terreus (strain NIH 2624 / FGSC A1156)).